A 694-amino-acid chain; its full sequence is Elongation factor G (694 aa).

Residues 9–288 form the tr-type G domain; that stretch reads DAIRNIGIMA…VIVKWLPSPL (280 aa). Residues 18–25, 82–86, and 136–139 each bind GTP; these read AHIDAGKT, DTPGH, and NKMD.

Belongs to the TRAFAC class translation factor GTPase superfamily. Classic translation factor GTPase family. EF-G/EF-2 subfamily.

Its subcellular location is the cytoplasm. In terms of biological role, catalyzes the GTP-dependent ribosomal translocation step during translation elongation. During this step, the ribosome changes from the pre-translocational (PRE) to the post-translocational (POST) state as the newly formed A-site-bound peptidyl-tRNA and P-site-bound deacylated tRNA move to the P and E sites, respectively. Catalyzes the coordinated movement of the two tRNA molecules, the mRNA and conformational changes in the ribosome. The protein is Elongation factor G of Chlamydia trachomatis serovar L2b (strain UCH-1/proctitis).